A 365-amino-acid polypeptide reads, in one-letter code: Palmitoyltransferase ZDHHC20 (365 aa).

At M1–V14 the chain is on the cytoplasmic side. Residues G15–V35 traverse the membrane as a helical segment. Topologically, residues E36–V53 are lumenal. The helical transmembrane segment at Y54–F74 threads the bilayer. The Cytoplasmic segment spans residues T75–K169. Positions R126–F176 constitute a DHHC domain. The Zn(2+) site is built by C128 and C131. Residues K135 and H140 to S143 each bind substrate. The Zn(2+) site is built by H141, C142, C145, C148, and H155. C156 (S-palmitoyl cysteine intermediate) is an active-site residue. C162 is a Zn(2+) binding site. Residues F170–L190 form a helical membrane-spanning segment. Topologically, residues Q191–K207 are lumenal. Residues F208–H231 traverse the membrane as a helical segment. At C232–N365 the chain is on the cytoplasmic side. A disordered region spans residues P301–N365. Residues E302 to P321 are compositionally biased toward polar residues. A phosphoserine mark is found at S305 and S330.

This sequence belongs to the DHHC palmitoyltransferase family. In terms of processing, autopalmitoylated (in vitro).

The protein localises to the golgi apparatus membrane. It localises to the cell membrane. It is found in the cytoplasm. The protein resides in the perinuclear region. Its subcellular location is the endoplasmic reticulum membrane. The protein localises to the endoplasmic reticulum-Golgi intermediate compartment membrane. It carries out the reaction L-cysteinyl-[protein] + hexadecanoyl-CoA = S-hexadecanoyl-L-cysteinyl-[protein] + CoA. The catalysed reaction is L-cysteinyl-[protein] + tetradecanoyl-CoA = S-tetradecanoyl-L-cysteinyl-[protein] + CoA. The enzyme catalyses L-cysteinyl-[protein] + octadecanoyl-CoA = S-octadecanoyl-L-cysteinyl-[protein] + CoA. Its function is as follows. Palmitoyltransferase that could catalyze the addition of palmitate onto various protein substrates. Catalyzes palmitoylation of Cys residues in the cytoplasmic C-terminus of EGFR, and modulates the duration of EGFR signaling by modulating palmitoylation-dependent EGFR internalization and degradation. Has a preference for acyl-CoA with C16 fatty acid chains. Can also utilize acyl-CoA with C14 and C18 fatty acid chains. May palmitoylate CALHM1 subunit of gustatory voltage-gated ion channels and modulate channel gating and kinetics. This Bos taurus (Bovine) protein is Palmitoyltransferase ZDHHC20.